Consider the following 360-residue polypeptide: NAD(P)H-quinone oxidoreductase subunit 1, chloroplastic (360 aa).

8 helical membrane-spanning segments follow: residues 27-47, 98-118, 129-149, 165-185, 203-223, 253-273, 297-317, and 340-360; these read VWIFVPIFSLVLGIITGVLVI, FSIGPSIAVISILLSYSVIPF, IGIFLWIAISSIAPIGLLMSG, AAQSISYEIPLTLCVLSISLL, FWGWNLWRQPIGFIIFLISSL, FGLFYVASYLNLLISALFVTI, VFGTTIGIFITLAKTYLVLVI, and FLLPISLGNLLLTTSFQLLSL.

The protein belongs to the complex I subunit 1 family. NDH is composed of at least 16 different subunits, 5 of which are encoded in the nucleus.

The protein localises to the plastid. It is found in the chloroplast thylakoid membrane. It carries out the reaction a plastoquinone + NADH + (n+1) H(+)(in) = a plastoquinol + NAD(+) + n H(+)(out). It catalyses the reaction a plastoquinone + NADPH + (n+1) H(+)(in) = a plastoquinol + NADP(+) + n H(+)(out). Its function is as follows. NDH shuttles electrons from NAD(P)H:plastoquinone, via FMN and iron-sulfur (Fe-S) centers, to quinones in the photosynthetic chain and possibly in a chloroplast respiratory chain. The immediate electron acceptor for the enzyme in this species is believed to be plastoquinone. Couples the redox reaction to proton translocation, and thus conserves the redox energy in a proton gradient. The chain is NAD(P)H-quinone oxidoreductase subunit 1, chloroplastic from Draba nemorosa (Woodland whitlowgrass).